The following is a 244-amino-acid chain: MSERDSGSSGPVKAKAAAPRAKTSGQAPFGAFVRKPVEKTEGKAKANAANAGSGATEMRMETAESWPVDAVEVGAIVDAYGLKGWVKVAAHADAGHGGDALLSAKRWWLLKGQERKSAPSLQAKTHSDSVVAHLGGVTDRDVALALRGSRVYISRSEFPALGADEFYWVDLLGLDVVNVAGVSLGKVADMIDNGAHSVLRIEYPATDKSGKPVTGERLIPFVGVFVKTVDQAAKQITVDWEADY.

Residues 1 to 58 (MSERDSGSSGPVKAKAAAPRAKTSGQAPFGAFVRKPVEKTEGKAKANAANAGSGATEM) are disordered. The segment covering 13–22 (KAKAAAPRAK) has biased composition (low complexity). Basic and acidic residues predominate over residues 35-44 (KPVEKTEGKA). Over residues 45–57 (KANAANAGSGATE) the composition is skewed to low complexity. The 82-residue stretch at 163–244 (ADEFYWVDLL…QITVDWEADY (82 aa)) folds into the PRC barrel domain.

The protein belongs to the RimM family. Binds ribosomal protein uS19.

The protein localises to the cytoplasm. Its function is as follows. An accessory protein needed during the final step in the assembly of 30S ribosomal subunit, possibly for assembly of the head region. Essential for efficient processing of 16S rRNA. May be needed both before and after RbfA during the maturation of 16S rRNA. It has affinity for free ribosomal 30S subunits but not for 70S ribosomes. This is Ribosome maturation factor RimM from Paraburkholderia xenovorans (strain LB400).